The sequence spans 45 residues: Large ribosomal subunit protein bL34 (45 aa).

This sequence belongs to the bacterial ribosomal protein bL34 family.

The sequence is that of Large ribosomal subunit protein bL34 from Leifsonia xyli subsp. xyli (strain CTCB07).